We begin with the raw amino-acid sequence, 879 residues long: Metabotropic glutamate receptor 3 (879 aa).

Positions 1-22 are cleaved as a signal peptide; sequence MKMLTRLQVLTLALFSKGFLLS. The Extracellular portion of the chain corresponds to 23 to 576; it reads LGDHNFLRRE…EDYIRWEDAW (554 aa). A disulfide bridge connects residues Cys57 and Cys99. L-glutamate is bound by residues Ser151 and 172-174; that span reads AST. A glycan (N-linked (GlcNAc...) asparagine) is linked at Asn209. Tyr222 is a binding site for L-glutamate. 7 disulfides stabilise this stretch: Cys240–Cys527, Cys361–Cys373, Cys412–Cys419, Cys509–Cys528, Cys513–Cys531, Cys534–Cys546, and Cys549–Cys562. A glycan (N-linked (GlcNAc...) asparagine) is linked at Asn292. Asp301 provides a ligand contact to L-glutamate. L-glutamate is bound at residue Lys389. N-linked (GlcNAc...) asparagine glycans are attached at residues Asn414 and Asn439. A helical membrane pass occupies residues 577-599; the sequence is AIGPVTIACLGFMCTCMVVTVFI. Topologically, residues 600 to 613 are cytoplasmic; the sequence is KHNNTPLVKASGRE. A helical transmembrane segment spans residues 614 to 634; it reads LCYILLFGVGLSYCMTFFFIA. Topologically, residues 635 to 645 are extracellular; that stretch reads KPSPVICALRR. Residues 646–664 traverse the membrane as a helical segment; it reads LGLGSSFAICYSALLTKTN. Residues 665–688 lie on the Cytoplasmic side of the membrane; that stretch reads CIARIFDGVKNGAQRPKFISPSSQ. Residues 689–709 form a helical membrane-spanning segment; sequence VFICLGLILVQIVMVSVWLIL. The Extracellular segment spans residues 710–734; it reads EAPGTRRYTLAEKRETVILKCNVKD. Residues 735–756 traverse the membrane as a helical segment; sequence SSMLISLTYDVILVILCTVYAF. The Cytoplasmic portion of the chain corresponds to 757–769; the sequence is KTRKCPENFNEAK. The chain crosses the membrane as a helical span at residues 770–792; it reads FIGFTMYTTCIIWLAFLPIFYVT. Residues 793-802 are Extracellular-facing; sequence SSDYRVQTTT. Residues 803 to 828 traverse the membrane as a helical segment; the sequence is MCISVSLSGFVVLGCLFAPKVHIILF. Residues 829-879 are Cytoplasmic-facing; sequence QPQKNVVTHRLHLNRFSVSGTGTTYSQSSASTYVPTVCNGREVLDSTTSSL.

Belongs to the G-protein coupled receptor 3 family. As to quaternary structure, interacts with TAMALIN. In terms of tissue distribution, detected in brain cortex, thalamus, subthalamic nucleus, substantia nigra, hypothalamus, hippocampus, corpus callosum, caudate nucleus and amygdala.

It is found in the cell membrane. In terms of biological role, G-protein coupled receptor for glutamate. Ligand binding causes a conformation change that triggers signaling via guanine nucleotide-binding proteins (G proteins) and modulates the activity of down-stream effectors. Signaling inhibits adenylate cyclase activity. This is Metabotropic glutamate receptor 3 (GRM3) from Homo sapiens (Human).